Reading from the N-terminus, the 104-residue chain is uncharacterized protein (104 aa).

This is an uncharacterized protein from Acidithiobacillus ferridurans.